The following is a 168-amino-acid chain: Sperm acrosome-associated protein 9 (168 aa).

Microtubule inner protein component of sperm flagellar doublet microtubules. Interacts with CABP1 and CALR. Interacts with INCA1. Interacts with microtubules. Expressed in sperm (at protein level). Expressed from almost all the cell types of testis, with abundant expression in round and elongated spermatids (at protein level). Predominantly expressed in tissues containing motile cilia.

It is found in the cytoplasm. Its subcellular location is the cytoplasmic vesicle. The protein resides in the secretory vesicle. It localises to the acrosome. The protein localises to the cytoskeleton. It is found in the cilium basal body. Its subcellular location is the flagellum axoneme. The protein resides in the cilium axoneme. It localises to the nucleus. In terms of biological role, microtubule inner protein (MIP) part of the dynein-decorated doublet microtubules (DMTs) of multiciliated respiratory cells and the distal singlet microtubules of monoflagellated spermatozoa. Forms an extensive interaction network cross-linking the lumen of axonemal doublet microtubules. The protein is Sperm acrosome-associated protein 9 of Mus musculus (Mouse).